A 262-amino-acid chain; its full sequence is 5'-nucleotidase SurE (262 aa).

A divalent metal cation contacts are provided by aspartate 9, aspartate 10, serine 40, and asparagine 95.

Belongs to the SurE nucleotidase family. A divalent metal cation is required as a cofactor.

The protein resides in the cytoplasm. The enzyme catalyses a ribonucleoside 5'-phosphate + H2O = a ribonucleoside + phosphate. Nucleotidase that shows phosphatase activity on nucleoside 5'-monophosphates. This Aliarcobacter butzleri (strain RM4018) (Arcobacter butzleri) protein is 5'-nucleotidase SurE.